The chain runs to 86 residues: Small ribosomal subunit protein uS17 (86 aa).

It belongs to the universal ribosomal protein uS17 family. In terms of assembly, part of the 30S ribosomal subunit.

Functionally, one of the primary rRNA binding proteins, it binds specifically to the 5'-end of 16S ribosomal RNA. The protein is Small ribosomal subunit protein uS17 of Roseiflexus sp. (strain RS-1).